Here is a 286-residue protein sequence, read N- to C-terminus: 4-hydroxybenzoate octaprenyltransferase (286 aa).

A run of 8 helical transmembrane segments spans residues 20-40 (IGTL…AQGL), 43-63 (IKVL…GCII), 96-116 (LFTL…PLVV), 142-162 (FLGI…LGEV), 167-187 (WWLF…YAIV), 210-230 (QIIG…GLVA), 235-255 (IYGL…RLIF), and 266-286 (FLNN…DYMI).

It belongs to the UbiA prenyltransferase family. Mg(2+) serves as cofactor.

The protein resides in the cell inner membrane. It catalyses the reaction all-trans-octaprenyl diphosphate + 4-hydroxybenzoate = 4-hydroxy-3-(all-trans-octaprenyl)benzoate + diphosphate. Its pathway is cofactor biosynthesis; ubiquinone biosynthesis. In terms of biological role, catalyzes the prenylation of para-hydroxybenzoate (PHB) with an all-trans polyprenyl group. Mediates the second step in the final reaction sequence of ubiquinone-8 (UQ-8) biosynthesis, which is the condensation of the polyisoprenoid side chain with PHB, generating the first membrane-bound Q intermediate 3-octaprenyl-4-hydroxybenzoate. The protein is 4-hydroxybenzoate octaprenyltransferase of Shewanella frigidimarina (strain NCIMB 400).